A 335-amino-acid chain; its full sequence is NADH-quinone oxidoreductase subunit H (335 aa).

Helical transmembrane passes span 11–31 (VILTVIKAIVILLAVVVAGAL), 81–101 (VIFTLAPVVAMSALLIAFAII), 114–134 (IGLLFFFAMAGLSVYAVLFAG), 154–174 (VSYEVFMGLALMGIVVQVGSF), 187–207 (LWFIIPQFFGFCTFFIAGVAV), 238–258 (FFVGEYIGIILISALLVTLFF), 270–290 (QLSFVWFALKTAFFILLFILL), and 307–327 (WKFCLPLTLINLLVTAAIVLW).

Belongs to the complex I subunit 1 family. As to quaternary structure, NDH-1 is composed of 13 different subunits. Subunits NuoA, H, J, K, L, M, N constitute the membrane sector of the complex.

Its subcellular location is the cell inner membrane. The catalysed reaction is a quinone + NADH + 5 H(+)(in) = a quinol + NAD(+) + 4 H(+)(out). Its function is as follows. NDH-1 shuttles electrons from NADH, via FMN and iron-sulfur (Fe-S) centers, to quinones in the respiratory chain. The immediate electron acceptor for the enzyme in this species is believed to be ubiquinone. Couples the redox reaction to proton translocation (for every two electrons transferred, four hydrogen ions are translocated across the cytoplasmic membrane), and thus conserves the redox energy in a proton gradient. This subunit may bind ubiquinone. In Pseudomonas fluorescens (strain Pf0-1), this protein is NADH-quinone oxidoreductase subunit H.